The chain runs to 273 residues: Putative esterase/lipase 3 (273 aa).

The active site involves histidine 34. Catalysis depends on serine 100, which acts as the Charge relay system.

Belongs to the lipase/esterase LIP3/BchO family.

The protein is Putative esterase/lipase 3 of Mycoplasma genitalium (strain ATCC 33530 / DSM 19775 / NCTC 10195 / G37) (Mycoplasmoides genitalium).